We begin with the raw amino-acid sequence, 277 residues long: Urease accessory protein UreD (277 aa).

Belongs to the UreD family. UreD, UreF and UreG form a complex that acts as a GTP-hydrolysis-dependent molecular chaperone, activating the urease apoprotein by helping to assemble the nickel containing metallocenter of UreC. The UreE protein probably delivers the nickel.

The protein localises to the cytoplasm. Required for maturation of urease via the functional incorporation of the urease nickel metallocenter. This is Urease accessory protein UreD from Pseudomonas putida (strain GB-1).